Consider the following 91-residue polypeptide: DNA-directed RNA polymerase subunit omega (91 aa).

It belongs to the RNA polymerase subunit omega family. As to quaternary structure, the RNAP catalytic core consists of 2 alpha, 1 beta, 1 beta' and 1 omega subunit. When a sigma factor is associated with the core the holoenzyme is formed, which can initiate transcription.

It catalyses the reaction RNA(n) + a ribonucleoside 5'-triphosphate = RNA(n+1) + diphosphate. Its function is as follows. Promotes RNA polymerase assembly. Latches the N- and C-terminal regions of the beta' subunit thereby facilitating its interaction with the beta and alpha subunits. This is DNA-directed RNA polymerase subunit omega from Aeromonas hydrophila subsp. hydrophila (strain ATCC 7966 / DSM 30187 / BCRC 13018 / CCUG 14551 / JCM 1027 / KCTC 2358 / NCIMB 9240 / NCTC 8049).